A 204-amino-acid polypeptide reads, in one-letter code: HTH-type transcriptional repressor KstR (204 aa).

Residues Arg-18–Ile-78 form the HTH tetR-type domain. The segment at residues Gln-41 to Phe-60 is a DNA-binding region (H-T-H motif).

As to quaternary structure, homodimer.

Functionally, controls the expression of genes used for utilizing diverse lipids as energy sources. This is HTH-type transcriptional repressor KstR (kstR) from Mycolicibacterium smegmatis (strain ATCC 700084 / mc(2)155) (Mycobacterium smegmatis).